A 55-amino-acid polypeptide reads, in one-letter code: Large ribosomal subunit protein bL33 (55 aa).

It belongs to the bacterial ribosomal protein bL33 family.

The polypeptide is Large ribosomal subunit protein bL33 (Burkholderia cenocepacia (strain ATCC BAA-245 / DSM 16553 / LMG 16656 / NCTC 13227 / J2315 / CF5610) (Burkholderia cepacia (strain J2315))).